The primary structure comprises 401 residues: MLRWITAGESHGRALVAVLEGMVAGVEITSTDISEQLARRRLGYGRGARMSFERDAVSVLSGVRHGLTLGGPIAVEIGNTEWPKWETVMATDPVDPAQLADSARNAPLTRPRPGHADYAGMLKYGFDDARPVLERASARETAARVAAGTIARSFLRQALGVEVLSHVIAIGPSAPYEGPPPGPGDLPAIDASPVRAYDEAAEQAMIAEIEAAKKDGDTLGGVVEVVALGLPVGLGSFTSGDNRLDGQLAAAVMGIQAIKGVEIGDGFATARRRGSQAHDEMYPGPDGVVRSTNRAGGLEGGMTNGQPLRVRAAMKPISTVPRALATVDMATGDEAVAIHQRSDVCAVPAAGVVVEAMVALVLARAALQKFGGDSLAETRRNIDAYRRAVAEREAPAARGTA.

2 residues coordinate NADP(+): arginine 40 and arginine 46. Residues 135-137, 256-257, glycine 300, 315-319, and arginine 341 each bind FMN; these read RAS, QA, and KPIST.

This sequence belongs to the chorismate synthase family. As to quaternary structure, homotetramer. Requires FMNH2 as cofactor.

The enzyme catalyses 5-O-(1-carboxyvinyl)-3-phosphoshikimate = chorismate + phosphate. Its pathway is metabolic intermediate biosynthesis; chorismate biosynthesis; chorismate from D-erythrose 4-phosphate and phosphoenolpyruvate: step 7/7. In terms of biological role, catalyzes the anti-1,4-elimination of the C-3 phosphate and the C-6 proR hydrogen from 5-enolpyruvylshikimate-3-phosphate (EPSP) to yield chorismate, which is the branch point compound that serves as the starting substrate for the three terminal pathways of aromatic amino acid biosynthesis. This reaction introduces a second double bond into the aromatic ring system. This is Chorismate synthase from Mycobacterium avium (strain 104).